Consider the following 296-residue polypeptide: Bifunctional protein FolD (296 aa).

NADP(+)-binding positions include 170-172 and serine 195; that span reads GRS.

It belongs to the tetrahydrofolate dehydrogenase/cyclohydrolase family. As to quaternary structure, homodimer.

It catalyses the reaction (6R)-5,10-methylene-5,6,7,8-tetrahydrofolate + NADP(+) = (6R)-5,10-methenyltetrahydrofolate + NADPH. The catalysed reaction is (6R)-5,10-methenyltetrahydrofolate + H2O = (6R)-10-formyltetrahydrofolate + H(+). It participates in one-carbon metabolism; tetrahydrofolate interconversion. Its function is as follows. Catalyzes the oxidation of 5,10-methylenetetrahydrofolate to 5,10-methenyltetrahydrofolate and then the hydrolysis of 5,10-methenyltetrahydrofolate to 10-formyltetrahydrofolate. The protein is Bifunctional protein FolD of Rhodospirillum rubrum (strain ATCC 11170 / ATH 1.1.1 / DSM 467 / LMG 4362 / NCIMB 8255 / S1).